The chain runs to 1202 residues: Ribonuclease P protein component, mitochondrial (1202 aa).

The transit peptide at 1–122 directs the protein to the mitochondrion; sequence MAFKSFIYSK…NNNNNQHRYY (122 aa). The disordered stretch occupies residues 109-134; it reads NYVNNNNNNQHRYYSTGPTLPTNQYD. Residues 118-134 show a composition bias toward polar residues; the sequence is QHRYYSTGPTLPTNQYD.

As to quaternary structure, consists of an RNA moiety (RPM1) and the protein component (RPM2). Both are necessary for full enzymatic activity.

It localises to the mitochondrion. It carries out the reaction Endonucleolytic cleavage of RNA, removing 5'-extranucleotides from tRNA precursor.. Functionally, ribonuclease P generates mature tRNA molecules by cleaving their 5'-ends. In Saccharomyces cerevisiae (strain ATCC 204508 / S288c) (Baker's yeast), this protein is Ribonuclease P protein component, mitochondrial (RPM2).